Consider the following 455-residue polypeptide: Putative O-acetyltransferase SAT14 (455 aa).

Belongs to the lysine N-acyltransferase MbtK family.

It participates in mycotoxin biosynthesis. Functionally, putative O-acetyltransferase; part of the satratoxin SC2 cluster involved in the biosynthesis of satratoxins, trichothecene mycotoxins that are associated with human food poisonings. Satratoxins are suggested to be made by products of multiple gene clusters (SC1, SC2 and SC3) that encode 21 proteins in all, including polyketide synthases, acetyltransferases, and other enzymes expected to modify the trichothecene skeleton. SC1 encodes 10 proteins, SAT1 to SAT10. The largest are SAT8, which encodes a putative polyketide synthase (PKS) with a conventional non-reducing architecture, and SAT10, a putative protein containing four ankyrin repeats and thus may be involved in protein scaffolding. The putative short-chain reductase SAT3 may assist the PKS in some capacity. SAT6 contains a secretory lipase domain and acts probably as a trichothecene esterase. SAT5 encodes a putative acetyltransferase, and so, with SAT6, may affect endogenous protection from toxicity. The probable transcription factor SAT9 may regulate the expression of the SC1 cluster. SC2 encodes proteins SAT11 to SAT16, the largest of which encodes the putative reducing PKS SAT13. SAT11 is a cytochrome P450 monooxygenase, while SAT14 and SAT16 are probable acetyltransferases. The SC2 cluster may be regulated by the transcription factor SAT15. SC3 is a small cluster that encodes 5 proteins, SAT17 to SAT21. SAT21 is a putative MFS-type transporter which may have a role in exporting secondary metabolites. The four other proteins putatively encoded in SC3 include the taurine hydroxylase-like protein SAT17, the O-methyltransferase SAT18, the acetyltransferase SAT19, and the Cys6-type zinc finger SAT20, the latter being probably involved in regulation of SC3 expression. This Stachybotrys chartarum (strain CBS 109288 / IBT 7711) (Toxic black mold) protein is Putative O-acetyltransferase SAT14.